Reading from the N-terminus, the 810-residue chain is Protein kinase C-binding protein NELL1 (810 aa).

The first 21 residues, 1 to 21 (MPMDVILVLWFCVCTARTVLG), serve as a signal peptide directing secretion. 6 N-linked (GlcNAc...) asparagine glycosylation sites follow: asparagine 40, asparagine 53, asparagine 83, asparagine 224, asparagine 294, and asparagine 372. Residues 57–227 (AFLFQDVQRE…TQCPNLNRTC (171 aa)) enclose the Laminin G-like domain. Residues 271–332 (KTCQVSGLLY…ISGQCCKVCR (62 aa)) form the VWFC 1 domain. Disulfide bonds link cysteine 395–cysteine 407, cysteine 401–cysteine 416, and cysteine 418–cysteine 432. Aspartate 434, isoleucine 435, and glutamate 437 together coordinate Ca(2+). Residues 434–475 (DIDECAAKMHYCHANTVCVNLPGLYRCDCIPGYIRVDDFSCT) form the EGF-like 1; calcium-binding domain. Disulfide bonds link cysteine 438–cysteine 451, cysteine 445–cysteine 460, cysteine 462–cysteine 474, cysteine 480–cysteine 493, cysteine 487–cysteine 502, cysteine 504–cysteine 515, cysteine 519–cysteine 529, cysteine 523–cysteine 535, cysteine 537–cysteine 546, cysteine 553–cysteine 566, cysteine 560–cysteine 575, cysteine 577–cysteine 594, cysteine 600–cysteine 613, cysteine 607–cysteine 622, and cysteine 624–cysteine 630. Ca(2+) contacts are provided by asparagine 453, leucine 454, and leucine 457. The 41-residue stretch at 476 to 516 (EHDDCGSGQHNCDKNAICTNTVQGHSCTCQPGYVGNGTVCK) folds into the EGF-like 2; calcium-binding domain. Asparagine 511 is a glycosylation site (N-linked (GlcNAc...) asparagine). In terms of domain architecture, EGF-like 3 spans 517–547 (AFCEEGCRYGGTCVAPNKCVCPSGFTGSHCE). The EGF-like 4; calcium-binding domain occupies 549–587 (DIDECAEGFVECHNHSRCVNLPGWYHCECRSGFHDDGTY). A glycan (N-linked (GlcNAc...) asparagine) is linked at asparagine 562. An EGF-like 5; calcium-binding domain is found at 596–631 (DIDECALRTHTCWNDSACINLAGGFDCLCPSGPSCS). Asparagine 609 carries an N-linked (GlcNAc...) asparagine glycan. VWFC domains are found at residues 632-687 (GDCP…PECD) and 692-750 (SQCL…PRCV). Asparagine 708 carries an N-linked (GlcNAc...) asparagine glycan.

In terms of assembly, homotrimer. Binds to PKC beta-1. Interacts with ATRAID; the interaction promotes osteoblast cell differentiation and mineralization. Interacts with ROBO3.

It localises to the cytoplasm. Its subcellular location is the nucleus envelope. The protein localises to the secreted. In terms of biological role, plays a role in the control of cell growth and differentiation. Promotes osteoblast cell differentiation and terminal mineralization. This chain is Protein kinase C-binding protein NELL1 (Nell1), found in Mus musculus (Mouse).